Here is a 226-residue protein sequence, read N- to C-terminus: MVKSTTAGNNAVSSLESTDSKKSRKEKSREKEHRRAQCINSAFEILQQHIPYLKSEERKSLPKIKTLRLAMQYIDHLKKLLGGNEMLETDCNESRPLTHSDFRVNISNEIRIRNSYRERAHNQELDEATVKRILAREDQRRRCSSVPEGIQRYTPYQSRQFGPISNNVCNFRHVDANQYNTNFMEYQTQMVQVANFPNQFSHEYYNYGTFPVIDPTSLENSNPILQ.

The segment covering 1 to 15 (MVKSTTAGNNAVSSL) has biased composition (polar residues). Residues 1 to 35 (MVKSTTAGNNAVSSLESTDSKKSRKEKSREKEHRR) form a disordered region. The basic motif stretch occupies residues 23-36 (SRKEKSREKEHRRA). One can recognise a bHLH domain in the interval 23-77 (SRKEKSREKEHRRAQCINSAFEILQQHIPYLKSEERKSLPKIKTLRLAMQYIDHL). The segment at 37–77 (QCINSAFEILQQHIPYLKSEERKSLPKIKTLRLAMQYIDHL) is helix-loop-helix motif.

The protein localises to the nucleus. Probable transcription factor which regulates early embryonic myogenesis, in cooperation with transcription factors unc-120 and hlh-1. Involved in controlling the number and position of somatic gonadal precursor cells (SGPs) in the gonadal primordium, and embryonic body shape. This Caenorhabditis elegans protein is Hand transcription factor 1.